The following is a 386-amino-acid chain: Mannitol-1-phosphate 5-dehydrogenase (386 aa).

6–17 (AIHFGGGNIGRG) is a binding site for NAD(+). Lys214 is an active-site residue.

This sequence belongs to the mannitol dehydrogenase family. In terms of assembly, monomer.

It catalyses the reaction D-mannitol 1-phosphate + NAD(+) = beta-D-fructose 6-phosphate + NADH + H(+). Functionally, catalyzes the NAD(H)-dependent interconversion of D-fructose 6-phosphate and D-mannitol 1-phosphate in the mannitol metabolic pathway. Plays a key role in liamocins biosynthesis by providing the mannitol moity that is linked to 3,5-dihydroxydecanoic acid (provided by the HR-PKS PKS1) via ester bond formation catalyzed by the esterase EST1. The sequence is that of Mannitol-1-phosphate 5-dehydrogenase from Aureobasidium melanogenum (Aureobasidium pullulans var. melanogenum).